We begin with the raw amino-acid sequence, 118 residues long: Ribonuclease P protein component (118 aa).

Belongs to the RnpA family. In terms of assembly, consists of a catalytic RNA component (M1 or rnpB) and a protein subunit.

The enzyme catalyses Endonucleolytic cleavage of RNA, removing 5'-extranucleotides from tRNA precursor.. Functionally, RNaseP catalyzes the removal of the 5'-leader sequence from pre-tRNA to produce the mature 5'-terminus. It can also cleave other RNA substrates such as 4.5S RNA. The protein component plays an auxiliary but essential role in vivo by binding to the 5'-leader sequence and broadening the substrate specificity of the ribozyme. In Rickettsia conorii (strain ATCC VR-613 / Malish 7), this protein is Ribonuclease P protein component.